The sequence spans 413 residues: Arginine biosynthesis bifunctional protein ArgJ (413 aa).

Threonine 163, lysine 189, threonine 200, glutamate 286, asparagine 408, and threonine 413 together coordinate substrate. The active-site Nucleophile is the threonine 200.

This sequence belongs to the ArgJ family. Heterotetramer of two alpha and two beta chains.

Its subcellular location is the cytoplasm. It catalyses the reaction N(2)-acetyl-L-ornithine + L-glutamate = N-acetyl-L-glutamate + L-ornithine. It carries out the reaction L-glutamate + acetyl-CoA = N-acetyl-L-glutamate + CoA + H(+). Its pathway is amino-acid biosynthesis; L-arginine biosynthesis; L-ornithine and N-acetyl-L-glutamate from L-glutamate and N(2)-acetyl-L-ornithine (cyclic): step 1/1. The protein operates within amino-acid biosynthesis; L-arginine biosynthesis; N(2)-acetyl-L-ornithine from L-glutamate: step 1/4. Catalyzes two activities which are involved in the cyclic version of arginine biosynthesis: the synthesis of N-acetylglutamate from glutamate and acetyl-CoA as the acetyl donor, and of ornithine by transacetylation between N(2)-acetylornithine and glutamate. This is Arginine biosynthesis bifunctional protein ArgJ from Staphylococcus aureus (strain Mu50 / ATCC 700699).